We begin with the raw amino-acid sequence, 396 residues long: uncharacterized protein (396 aa).

N6-(pyridoxal phosphate)lysine is present on Lys-219.

This sequence belongs to the class-V pyridoxal-phosphate-dependent aminotransferase family. It depends on pyridoxal 5'-phosphate as a cofactor.

It is found in the cytoplasm. The protein resides in the nucleus. This is an uncharacterized protein from Schizosaccharomyces pombe (strain 972 / ATCC 24843) (Fission yeast).